The sequence spans 178 residues: Large ribosomal subunit protein uL6 (178 aa).

This sequence belongs to the universal ribosomal protein uL6 family. In terms of assembly, part of the 50S ribosomal subunit.

Its function is as follows. This protein binds to the 23S rRNA, and is important in its secondary structure. It is located near the subunit interface in the base of the L7/L12 stalk, and near the tRNA binding site of the peptidyltransferase center. The polypeptide is Large ribosomal subunit protein uL6 (Coxiella burnetii (strain CbuK_Q154) (Coxiella burnetii (strain Q154))).